A 361-amino-acid polypeptide reads, in one-letter code: 3-dehydroquinate synthase (361 aa).

Residues 72–77 (SGEKEK), 130–131 (TT), Lys142, and Lys151 each bind NAD(+). Residues Glu184, His247, and His264 each coordinate Zn(2+).

This sequence belongs to the sugar phosphate cyclases superfamily. Dehydroquinate synthase family. The cofactor is Co(2+). It depends on Zn(2+) as a cofactor. NAD(+) serves as cofactor.

It localises to the cytoplasm. It carries out the reaction 7-phospho-2-dehydro-3-deoxy-D-arabino-heptonate = 3-dehydroquinate + phosphate. It functions in the pathway metabolic intermediate biosynthesis; chorismate biosynthesis; chorismate from D-erythrose 4-phosphate and phosphoenolpyruvate: step 2/7. Functionally, catalyzes the conversion of 3-deoxy-D-arabino-heptulosonate 7-phosphate (DAHP) to dehydroquinate (DHQ). The chain is 3-dehydroquinate synthase from Bacillus mycoides (strain KBAB4) (Bacillus weihenstephanensis).